Here is a 363-residue protein sequence, read N- to C-terminus: Carbamoyl phosphate synthase small chain (363 aa).

CPSase stretches follow at residues 1 to 168 (MTKR…ASPG) and 1 to 172 (MTKR…DGKR). Residues serine 46, glycine 220, and glycine 222 each coordinate L-glutamine. The Glutamine amidotransferase type-1 domain maps to 172–359 (RVVLVDYGVK…MEMMNVKEEG (188 aa)). The active-site Nucleophile is cysteine 247. L-glutamine-binding residues include leucine 248, glutamine 251, asparagine 289, glycine 291, and tyrosine 292. Catalysis depends on residues histidine 332 and glutamate 334.

It belongs to the CarA family. Composed of two chains; the small (or glutamine) chain promotes the hydrolysis of glutamine to ammonia, which is used by the large (or ammonia) chain to synthesize carbamoyl phosphate. Tetramer of heterodimers (alpha,beta)4.

The enzyme catalyses hydrogencarbonate + L-glutamine + 2 ATP + H2O = carbamoyl phosphate + L-glutamate + 2 ADP + phosphate + 2 H(+). The catalysed reaction is L-glutamine + H2O = L-glutamate + NH4(+). It functions in the pathway amino-acid biosynthesis; L-arginine biosynthesis; carbamoyl phosphate from bicarbonate: step 1/1. The protein operates within pyrimidine metabolism; UMP biosynthesis via de novo pathway; (S)-dihydroorotate from bicarbonate: step 1/3. Small subunit of the glutamine-dependent carbamoyl phosphate synthetase (CPSase). CPSase catalyzes the formation of carbamoyl phosphate from the ammonia moiety of glutamine, carbonate, and phosphate donated by ATP, constituting the first step of 2 biosynthetic pathways, one leading to arginine and/or urea and the other to pyrimidine nucleotides. The small subunit (glutamine amidotransferase) binds and cleaves glutamine to supply the large subunit with the substrate ammonia. The chain is Carbamoyl phosphate synthase small chain from Listeria innocua serovar 6a (strain ATCC BAA-680 / CLIP 11262).